Consider the following 405-residue polypeptide: Imidazolonepropionase (405 aa).

2 residues coordinate Fe(3+): His72 and His74. Residues His72 and His74 each contribute to the Zn(2+) site. Positions 81, 144, and 177 each coordinate 4-imidazolone-5-propanoate. Tyr144 lines the N-formimidoyl-L-glutamate pocket. Position 242 (His242) interacts with Fe(3+). Zn(2+) is bound at residue His242. Residue Gln245 coordinates 4-imidazolone-5-propanoate. Asp317 serves as a coordination point for Fe(3+). Asp317 lines the Zn(2+) pocket. 2 residues coordinate N-formimidoyl-L-glutamate: Asn319 and Gly321. Thr322 lines the 4-imidazolone-5-propanoate pocket.

It belongs to the metallo-dependent hydrolases superfamily. HutI family. It depends on Zn(2+) as a cofactor. Requires Fe(3+) as cofactor.

It localises to the cytoplasm. The catalysed reaction is 4-imidazolone-5-propanoate + H2O = N-formimidoyl-L-glutamate. It participates in amino-acid degradation; L-histidine degradation into L-glutamate; N-formimidoyl-L-glutamate from L-histidine: step 3/3. Catalyzes the hydrolytic cleavage of the carbon-nitrogen bond in imidazolone-5-propanoate to yield N-formimidoyl-L-glutamate. It is the third step in the universal histidine degradation pathway. The sequence is that of Imidazolonepropionase from Klebsiella pneumoniae (strain 342).